The primary structure comprises 1285 residues: Ataxin-2 (1285 aa).

Disordered regions lie at residues 1-85 (MRSS…PGSR), 111-178 (ARAC…SPGA), and 197-224 (PVAS…GLPQ). Positions 29-38 (SLPRTARRGG) are enriched in basic residues. Residues 48–65 (AGPPPRGPGAPPRGPRSP) show a composition bias toward pro residues. Low complexity predominate over residues 128–144 (SSSARPAPGCPRPACEP). Over residues 205–214 (AGGGRPGLGR) the composition is skewed to gly residues. 2 positions are modified to phosphoserine: S218 and S219. The region spanning 237-314 (RMVHILTSVV…FVVVQFKDTD (78 aa)) is the Sm domain. 2 positions are modified to phosphoserine: S362 and S435. Basic and acidic residues-rich tracts occupy residues 428-440 (ALEN…EEKY) and 447-461 (CSDR…RDNK). 2 disordered regions span residues 428–925 (ALEN…HQQP) and 1111–1191 (AALH…QSSF). Position 477 is a phosphoserine (S477). Residues 498-510 (ASHTSDFNPNAGS) are compositionally biased toward polar residues. S523 bears the Phosphoserine mark. A compositionally biased stretch (low complexity) spans 526–552 (PSHSSRPPSRYQSGPNSLPPRAATHTR). The span at 554-567 (PSRPPSRPSRPPSH) shows a compositional bias: pro residues. S593 is modified (phosphoserine). The segment covering 596 to 606 (AQRHPRNHRVS) has biased composition (basic residues). R609 bears the Asymmetric dimethylarginine; alternate mark. R609 carries the omega-N-methylarginine; alternate modification. A phosphoserine mark is found at S611 and S653. A compositionally biased stretch (polar residues) spans 662 to 672 (PRQSSIGNSPS). Residues 685-694 (PAEAVSMPVP) show a composition bias toward low complexity. S697 is modified (phosphoserine). T710 carries the post-translational modification Phosphothreonine. Residues 737–746 (ASETSPSFSK) show a composition bias toward polar residues. Residues S741 and S753 each carry the phosphoserine modification. Residues 757-773 (SEHRKQIDDLKKFKNDF) show a composition bias toward basic and acidic residues. Polar residues predominate over residues 776–789 (QPSSTSESMDQLLS). Residues 790 to 813 (KNREGEKSRDLIKDKTEASAKDSF) are compositionally biased toward basic and acidic residues. A compositionally biased stretch (low complexity) spans 814-838 (IDSSSSSSNCTSGSSKTNSPSISPS). 7 positions are modified to phosphoserine: S827, S828, S832, S836, S838, S859, and S860. Over residues 851-862 (VTSQGVQTSSPA) the composition is skewed to polar residues. A Glycyl lysine isopeptide (Lys-Gly) (interchain with G-Cter in SUMO2) cross-link involves residue K864. The span at 864–881 (KQEKDDREEKKDTTEQVR) shows a compositional bias: basic and acidic residues. 2 stretches are compositionally biased toward low complexity: residues 896–907 (SFSQPKPSTTPT) and 1128–1165 (GQQQ…QQSA).

It belongs to the ataxin-2 family. Interacts with RBFOX1. Monomer. Can also form homodimers. Interacts with polyribosomes. Interacts with EGFR. Interacts with SH3GL3. Interacts with SH3GL2, SH3KBP1 and CBL. Interacts with ATXN2L. Expressed in the heart, lung, liver, kidney, skeletal muscle, spleen and intestine. Predominant expression was seen in the brain where a high level expression was found in the pyramidal cortical neurons, large brain stem neurons and cerebellar Purkinje cells. All three isoforms were found in all the tissues except skeletal muscle where only isoform 1 was found.

It is found in the cytoplasm. Involved in EGFR trafficking, acting as negative regulator of endocytic EGFR internalization at the plasma membrane. This is Ataxin-2 (Atxn2) from Mus musculus (Mouse).